The sequence spans 407 residues: Methylthioribose kinase (407 aa).

Residues N40, K57, and 111–113 (EDL) each bind ATP. A substrate-binding site is contributed by D229. 246-248 (DAE) lines the ATP pocket. Residue R344 participates in substrate binding.

It belongs to the methylthioribose kinase family. In terms of assembly, homodimer.

The enzyme catalyses 5-(methylsulfanyl)-D-ribose + ATP = 5-(methylsulfanyl)-alpha-D-ribose 1-phosphate + ADP + H(+). It functions in the pathway amino-acid biosynthesis; L-methionine biosynthesis via salvage pathway; S-methyl-5-thio-alpha-D-ribose 1-phosphate from S-methyl-5'-thioadenosine (hydrolase route): step 2/2. In terms of biological role, catalyzes the phosphorylation of methylthioribose into methylthioribose-1-phosphate. This chain is Methylthioribose kinase, found in Yersinia pseudotuberculosis serotype O:1b (strain IP 31758).